Reading from the N-terminus, the 89-residue chain is MFVVHTIYENEGNTTRDYGHVNQFFRCNPEFRAQKDERIFKKCVEQGFIYIKHWMQGNKVRTTYHRSLTELNDELIYNRAVNQTLKDEQ.

This is an uncharacterized protein from Escherichia coli (Bacteriophage T4).